The primary structure comprises 757 residues: GLC7-interacting protein 4 (757 aa).

The span at 427–437 (EQERQREEKKN) shows a compositional bias: basic and acidic residues. Disordered regions lie at residues 427 to 541 (EQER…SGSL) and 558 to 590 (LNEK…QNSV). Residues 438–477 (SSLSQKNTSSSSSITSNSSSLNVSPNILSPLRLSRTSSVS) are compositionally biased toward low complexity. Over residues 501–510 (KKTRSVRTRN) the composition is skewed to basic residues. The segment covering 511–521 (RSSSLQSVSSL) has biased composition (low complexity). 2 stretches are compositionally biased toward polar residues: residues 522 to 541 (EDTS…SGSL) and 569 to 590 (TKLN…QNSV).

Belongs to the GIP4 family. As to quaternary structure, interacts with GLC7.

The protein resides in the cytoplasm. Functionally, GLC7 phosphatase-regulatory protein involved in GLC7 subcellular redistribution and chromosome segregation. The protein is GLC7-interacting protein 4 (GIP4) of Kluyveromyces lactis (strain ATCC 8585 / CBS 2359 / DSM 70799 / NBRC 1267 / NRRL Y-1140 / WM37) (Yeast).